Consider the following 351-residue polypeptide: Photosystem II D2 protein (351 aa).

A helical membrane pass occupies residues 39–59 (TAYLAIGGWLTGTTFVTSWYT). Position 116 (histidine 116) interacts with chlorophyll a. The helical transmembrane segment at 123 to 139 (GFMLRQFELARLIGIRP) threads the bilayer. Pheophytin a-binding residues include glutamine 128 and asparagine 141. A helical transmembrane segment spans residues 151 to 164 (VFVSVFLLYPLGQS). Residue histidine 196 coordinates chlorophyll a. A helical transmembrane segment spans residues 206–226 (GALLSAIHGVTVENTLYEDGE). A plastoquinone contacts are provided by histidine 213 and phenylalanine 260. Histidine 213 lines the Fe cation pocket. Fe cation is bound at residue histidine 267. Residues 277–293 (GLWTSSIGIIGLALNLR) traverse the membrane as a helical segment.

This sequence belongs to the reaction center PufL/M/PsbA/D family. As to quaternary structure, PSII is composed of 1 copy each of membrane proteins PsbA, PsbB, PsbC, PsbD, PsbE, PsbF, PsbH, PsbI, PsbJ, PsbK, PsbL, PsbM, PsbT, PsbX, PsbY, PsbZ, Psb30/Ycf12, peripheral proteins PsbO, CyanoQ (PsbQ), PsbU, PsbV and a large number of cofactors. It forms dimeric complexes. The D1/D2 heterodimer binds P680, chlorophylls that are the primary electron donor of PSII, and subsequent electron acceptors. It shares a non-heme iron and each subunit binds pheophytin, quinone, additional chlorophylls, carotenoids and lipids. There is also a Cl(-1) ion associated with D1 and D2, which is required for oxygen evolution. The PSII complex binds additional chlorophylls, carotenoids and specific lipids. is required as a cofactor.

It localises to the host cellular thylakoid membrane. The enzyme catalyses 2 a plastoquinone + 4 hnu + 2 H2O = 2 a plastoquinol + O2. Its function is as follows. Photosystem II (PSII) is a light-driven water:plastoquinone oxidoreductase that uses light energy to abstract electrons from H(2)O, generating O(2) and a proton gradient subsequently used for ATP formation. It consists of a core antenna complex that captures photons, and an electron transfer chain that converts photonic excitation into a charge separation. The D1/D2 (PsbA/PsbD) reaction center heterodimer binds P680, the primary electron donor of PSII as well as several subsequent electron acceptors. D2 is needed for assembly of a stable PSII complex. This Synechococcus protein is Photosystem II D2 protein (psbD).